Consider the following 298-residue polypeptide: MNNLQAQFPHIAIKLNEPLSKYTYTKTGGNADVFVMPKTIEETKEIVTYCHQNKLPLTILGNGSNLIIKDGGIRGVIVHLDLLQSIERKNTQIIAMSGAKLIDTAKFALDESLSGLEFACGIPGSIGGALHMNAGAYGGEISDVLEAATVLTQSGELKKLKRSELKAAYRFSTIAEKKYIVLDATFSLELEDKNIIQAKMDELTALREAKQPLEYPSCGSVFKRPPGHFAGKLIQDSGLQGHIIGGAQVSLKHAGFIVNIGGATATDYMNLIAHVQQTVREKFDVELETEVKIIGEDK.

The FAD-binding PCMH-type domain maps to 27-191 (TGGNADVFVM…LDATFSLELE (165 aa)). Arginine 170 is a catalytic residue. Serine 220 serves as the catalytic Proton donor. Glutamate 290 is a catalytic residue.

The protein belongs to the MurB family. The cofactor is FAD.

The protein localises to the cytoplasm. The enzyme catalyses UDP-N-acetyl-alpha-D-muramate + NADP(+) = UDP-N-acetyl-3-O-(1-carboxyvinyl)-alpha-D-glucosamine + NADPH + H(+). It functions in the pathway cell wall biogenesis; peptidoglycan biosynthesis. Cell wall formation. This is UDP-N-acetylenolpyruvoylglucosamine reductase from Listeria innocua serovar 6a (strain ATCC BAA-680 / CLIP 11262).